The sequence spans 176 residues: Mitochondrial inner membrane protein Mpv17 (176 aa).

4 helical membrane-spanning segments follow: residues 18–38, 53–73, 94–114, and 131–151; these read VQVL…QQLV, TMVS…YKVL, GGFA…LNGL, and LITN…LVPL.

Belongs to the peroxisomal membrane protein PXMP2/4 family. As to expression, ubiquitous. Expressed in pancreas, kidney, muscle, liver, lung, placenta, brain and heart.

The protein localises to the mitochondrion inner membrane. Functionally, non-selective channel that modulates the membrane potential under normal conditions and oxidative stress, and is involved in mitochondrial homeostasis. Involved in mitochondrial deoxynucleoside triphosphates (dNTP) pool homeostasis and mitochondrial DNA (mtDNA) maintenance. May be involved in the regulation of reactive oxygen species metabolism and the control of oxidative phosphorylation. The sequence is that of Mitochondrial inner membrane protein Mpv17 from Homo sapiens (Human).